The sequence spans 340 residues: Lysophospholipase L2 (340 aa).

It is found in the cell inner membrane. It catalyses the reaction a 1-acyl-sn-glycero-3-phosphocholine + H2O = sn-glycerol 3-phosphocholine + a fatty acid + H(+). The sequence is that of Lysophospholipase L2 (pldB) from Escherichia coli O6:H1 (strain CFT073 / ATCC 700928 / UPEC).